A 191-amino-acid polypeptide reads, in one-letter code: GDP-mannose pyrophosphatase (191 aa).

GDP-alpha-D-mannose contacts are provided by residues Tyr17, Lys38–Glu40, Arg67, and Ala85–Leu87. A Nudix hydrolase domain is found at Asp43 to Leu180. 3 residues coordinate Mg(2+): Ala85, Glu100, and Glu104. The short motif at Gly86 to Gly106 is the Nudix box element. GDP-alpha-D-mannose-binding positions include Glu104, Glu127, Asp150–Glu151, and Lys176. Residue Glu151 coordinates Mg(2+).

Belongs to the Nudix hydrolase family. NudK subfamily. In terms of assembly, homodimer. Mg(2+) serves as cofactor.

The enzyme catalyses GDP-alpha-D-mannose + H2O = alpha-D-mannose 1-phosphate + GMP + 2 H(+). Functionally, nucleoside diphosphate sugar hydrolase that hydrolyzes GDP-mannose as its preferred substrate, yielding GMP and mannose-1-phosphate. The sequence is that of GDP-mannose pyrophosphatase (nudK) from Citrobacter koseri (strain ATCC BAA-895 / CDC 4225-83 / SGSC4696).